The primary structure comprises 279 residues: Phosphatidylglycerol--prolipoprotein diacylglyceryl transferase (279 aa).

7 helical membrane-spanning segments follow: residues 25-45, 60-80, 103-123, 133-153, 181-201, 209-229, and 236-256; these read WYGL…KFFV, YFIW…ILIY, FVGI…IATI, LWSL…FGRI, PSQL…LYFY, GELI…TEFL, and IGYF…MLIL. Arginine 152 contributes to the a 1,2-diacyl-sn-glycero-3-phospho-(1'-sn-glycerol) binding site.

Belongs to the Lgt family.

It localises to the cell inner membrane. It carries out the reaction L-cysteinyl-[prolipoprotein] + a 1,2-diacyl-sn-glycero-3-phospho-(1'-sn-glycerol) = an S-1,2-diacyl-sn-glyceryl-L-cysteinyl-[prolipoprotein] + sn-glycerol 1-phosphate + H(+). The protein operates within protein modification; lipoprotein biosynthesis (diacylglyceryl transfer). In terms of biological role, catalyzes the transfer of the diacylglyceryl group from phosphatidylglycerol to the sulfhydryl group of the N-terminal cysteine of a prolipoprotein, the first step in the formation of mature lipoproteins. The protein is Phosphatidylglycerol--prolipoprotein diacylglyceryl transferase of Campylobacter hominis (strain ATCC BAA-381 / DSM 21671 / CCUG 45161 / LMG 19568 / NCTC 13146 / CH001A).